Reading from the N-terminus, the 77-residue chain is Protein OPG195 (77 aa).

The signal sequence occupies residues 1-17 (MRSLIIVLLFPSIIYSM).

This sequence belongs to the chordopoxvirinae B9 protein family.

The polypeptide is Protein OPG195 (OPG197) (Homo sapiens (Human)).